A 308-amino-acid polypeptide reads, in one-letter code: Cytochrome b (308 aa).

Transmembrane regions (helical) follow at residues 1–21 (FGSL…LMAM), 45–66 (WLIR…YLHI), 81–101 (WNTG…GYVL), and 146–166 (FFAL…IHLT). The heme b site is built by H51 and H65. 2 residues coordinate heme b: H150 and H164. H169 provides a ligand contact to a ubiquinone. 3 helical membrane-spanning segments follow: residues 194-214 (TKDI…AMFS), 256-276 (LGGV…PFLH), and 288-308 (LSQL…WVGS).

Belongs to the cytochrome b family. In terms of assembly, the cytochrome bc1 complex contains 11 subunits: 3 respiratory subunits (MT-CYB, CYC1 and UQCRFS1), 2 core proteins (UQCRC1 and UQCRC2) and 6 low-molecular weight proteins (UQCRH/QCR6, UQCRB/QCR7, UQCRQ/QCR8, UQCR10/QCR9, UQCR11/QCR10 and a cleavage product of UQCRFS1). This cytochrome bc1 complex then forms a dimer. Heme b serves as cofactor.

The protein localises to the mitochondrion inner membrane. Component of the ubiquinol-cytochrome c reductase complex (complex III or cytochrome b-c1 complex) that is part of the mitochondrial respiratory chain. The b-c1 complex mediates electron transfer from ubiquinol to cytochrome c. Contributes to the generation of a proton gradient across the mitochondrial membrane that is then used for ATP synthesis. This is Cytochrome b (MT-CYB) from Asthenes dorbignyi (Creamy-breasted canastero).